Here is a 549-residue protein sequence, read N- to C-terminus: Chaperonin GroEL (549 aa).

ATP-binding positions include 29-32 (TLGP), K50, 86-90 (DGTTT), G414, 477-479 (NAA), and D493.

Belongs to the chaperonin (HSP60) family. Forms a cylinder of 14 subunits composed of two heptameric rings stacked back-to-back. Interacts with the co-chaperonin GroES.

The protein localises to the cytoplasm. The catalysed reaction is ATP + H2O + a folded polypeptide = ADP + phosphate + an unfolded polypeptide.. Together with its co-chaperonin GroES, plays an essential role in assisting protein folding. The GroEL-GroES system forms a nano-cage that allows encapsulation of the non-native substrate proteins and provides a physical environment optimized to promote and accelerate protein folding. This Geotalea uraniireducens (strain Rf4) (Geobacter uraniireducens) protein is Chaperonin GroEL.